A 362-amino-acid polypeptide reads, in one-letter code: MSDYTQQLQDKKDHLKTLFAGLDVPEWEVYESPDKHYRMRAEFRIWHEGGEMFYAMFEKGQKAGGASLIRCDRFEAASEAVNRLMPELIAVAAQSAELRNRWYAVEFLSTLSGEMLVTMIYHKRLDDEWMQAAQALQQQLDTSVIGRSRGQKIVLKQDYVTETLKVGNRDFRYRQIEGGFTQPNAAVCQKMLEWACGAAEGLGGDLLELYCGNGNFTLPLSEKFERVLATEISKTSVGAAQWNIEANGIGNIKIARLSAEEFTEAYTGKREFARLKDGGIALTDYAFSTIFVDPPRAGIDEETLKLVSQFDNIIYISCNPETLRANLDTLVETHVVERAALFDQFPFTHHIESGVLLKKKIL.

Residues Gln182, Tyr210, Asn215, Glu231, and Asp293 each coordinate S-adenosyl-L-methionine. Cys318 functions as the Nucleophile in the catalytic mechanism. Glu352 serves as the catalytic Proton acceptor.

Belongs to the class I-like SAM-binding methyltransferase superfamily. RNA M5U methyltransferase family. TrmA subfamily.

It carries out the reaction uridine(54) in tRNA + S-adenosyl-L-methionine = 5-methyluridine(54) in tRNA + S-adenosyl-L-homocysteine + H(+). The enzyme catalyses uridine(341) in tmRNA + S-adenosyl-L-methionine = 5-methyluridine(341) in tmRNA + S-adenosyl-L-homocysteine + H(+). Its function is as follows. Dual-specificity methyltransferase that catalyzes the formation of 5-methyluridine at position 54 (m5U54) in all tRNAs, and that of position 341 (m5U341) in tmRNA (transfer-mRNA). In Neisseria meningitidis serogroup A / serotype 4A (strain DSM 15465 / Z2491), this protein is tRNA/tmRNA (uracil-C(5))-methyltransferase.